Consider the following 437-residue polypeptide: Protein WVD2-like 5 (437 aa).

Disordered regions lie at residues 1 to 22 (MDPE…GGLA), 38 to 210 (TVDT…FSFK), and 254 to 437 (LRKS…AVEH). Positions 41–55 (TTSESQNENSANSST) are enriched in low complexity. The segment covering 58–86 (TIEHVKEAAEGTQVEHVDDSKCMKGEKAQ) has biased composition (basic and acidic residues). A compositionally biased stretch (polar residues) spans 121–140 (SNGSVAPNVQTTNPLKSKSF). The span at 151-167 (GKHDSAPAESADGEKVK) shows a compositional bias: basic and acidic residues. A Phosphoserine modification is found at Ser-208. Over residues 288-297 (KSPKLGRKKT) the composition is skewed to basic residues. Residues 360 to 371 (PAPAKAAIIPAK) are compositionally biased toward low complexity. Over residues 408–437 (EDSHETVSPRMNEDRADKSIEVSEAVAVEH) the composition is skewed to basic and acidic residues. Position 415 is a phosphoserine (Ser-415).

It belongs to the TPX2 family. In terms of tissue distribution, expressed in seedlings.

It is found in the cytoplasm. It localises to the cytoskeleton. In terms of biological role, microtubule-associated protein (MAP) that regulates the orientation of interphase cortical microtubules. This chain is Protein WVD2-like 5, found in Arabidopsis thaliana (Mouse-ear cress).